A 361-amino-acid polypeptide reads, in one-letter code: Ribosomal RNA large subunit methyltransferase M (361 aa).

Residues serine 193, 226–229 (CPGG), aspartate 245, aspartate 265, and aspartate 283 each bind S-adenosyl-L-methionine. Lysine 312 (proton acceptor) is an active-site residue.

The protein belongs to the class I-like SAM-binding methyltransferase superfamily. RNA methyltransferase RlmE family. RlmM subfamily. In terms of assembly, monomer.

It is found in the cytoplasm. It catalyses the reaction cytidine(2498) in 23S rRNA + S-adenosyl-L-methionine = 2'-O-methylcytidine(2498) in 23S rRNA + S-adenosyl-L-homocysteine + H(+). Its function is as follows. Catalyzes the 2'-O-methylation at nucleotide C2498 in 23S rRNA. This chain is Ribosomal RNA large subunit methyltransferase M, found in Histophilus somni (strain 129Pt) (Haemophilus somnus).